The primary structure comprises 416 residues: LL-diaminopimelate aminotransferase (416 aa).

Residues tyrosine 25 and glycine 52 each coordinate substrate. Pyridoxal 5'-phosphate contacts are provided by residues tyrosine 78, 115–116 (SK), tyrosine 140, asparagine 190, tyrosine 221, and 248–250 (SFS). Positions 116, 140, and 190 each coordinate substrate. Lysine 251 carries the post-translational modification N6-(pyridoxal phosphate)lysine. Arginine 259 contributes to the pyridoxal 5'-phosphate binding site.

Belongs to the class-I pyridoxal-phosphate-dependent aminotransferase family. In terms of assembly, homodimer. It depends on pyridoxal 5'-phosphate as a cofactor.

The protein localises to the cytoplasm. It carries out the reaction (2S,6S)-2,6-diaminopimelate + 2-oxoglutarate = (S)-2,3,4,5-tetrahydrodipicolinate + L-glutamate + H2O + H(+). The protein operates within amino-acid biosynthesis; L-lysine biosynthesis via DAP pathway; LL-2,6-diaminopimelate from (S)-tetrahydrodipicolinate (aminotransferase route): step 1/1. Its function is as follows. Involved in the synthesis of meso-diaminopimelate (m-DAP or DL-DAP), required for both lysine and peptidoglycan biosynthesis. Catalyzes the direct conversion of tetrahydrodipicolinate to LL-diaminopimelate. The sequence is that of LL-diaminopimelate aminotransferase (dapL) from Methanococcus maripaludis (strain DSM 14266 / JCM 13030 / NBRC 101832 / S2 / LL).